Reading from the N-terminus, the 328-residue chain is tRNA uridine(34) hydroxylase (328 aa).

Positions 130 to 224 (LDKDTVVLDT…YGKDPEVQGE (95 aa)) constitute a Rhodanese domain. Cys184 acts as the Cysteine persulfide intermediate in catalysis.

The protein belongs to the TrhO family.

The catalysed reaction is uridine(34) in tRNA + AH2 + O2 = 5-hydroxyuridine(34) in tRNA + A + H2O. Functionally, catalyzes oxygen-dependent 5-hydroxyuridine (ho5U) modification at position 34 in tRNAs. This chain is tRNA uridine(34) hydroxylase, found in Streptococcus pneumoniae serotype 19F (strain G54).